A 447-amino-acid chain; its full sequence is MKPVIALVGRPNVGKSTLFNRLTRSRDALVADMPGLTRDRHYGEGRVGERPFIAIDTGGFEPVAKEGIVAEMAKQTRQAVVEADVVIFIVDGRLGLAPQDRVIADYLRKTGRRILLAVNKAEGMKYTAVATDFYELGLGDPRAISSAHGDGVRELVDEALDLAFAERPELAEAAEGHDHGTRIAIVGRPNVGKSTLVNALIGEERVIAFDMPGTTRDAIYVDFERNGKPYTLIDTAGLRKRGKVFEAIEKFSVVKTLQSIADANVVVLLLDAQQDISDQDAHIAGFIVESGRALVIGVNKWDGLDGHARDRIKHDMERKLQFLSFANVHYISAKQRTGIGALMKSVDDAYAAAMVKLPTPKLTRVLQEAVEFQQPRRAGVSRPKLRYAHQGGSNPPIVVIHGNALSNIPETYRRFLEGRFRDAFQLKGTPLRIEFRTNKNPYAQSNE.

2 EngA-type G domains span residues 3–167 (PVIA…FAER) and 181–354 (TRIA…AAAM). GTP is bound by residues 9–16 (GRPNVGKS), 56–60 (DTGGF), 119–122 (NKAE), 187–194 (GRPNVGKS), 234–238 (DTAGL), and 299–302 (NKWD). The 85-residue stretch at 355–439 (VKLPTPKLTR…PLRIEFRTNK (85 aa)) folds into the KH-like domain.

It belongs to the TRAFAC class TrmE-Era-EngA-EngB-Septin-like GTPase superfamily. EngA (Der) GTPase family. Associates with the 50S ribosomal subunit.

Its function is as follows. GTPase that plays an essential role in the late steps of ribosome biogenesis. The sequence is that of GTPase Der from Ralstonia nicotianae (strain ATCC BAA-1114 / GMI1000) (Ralstonia solanacearum).